Reading from the N-terminus, the 465-residue chain is uncharacterized protein (465 aa).

The TRAM domain occupies methionine 1–serine 50. [4Fe-4S] cluster-binding residues include cysteine 63, cysteine 69, cysteine 72, and cysteine 168. S-adenosyl-L-methionine is bound by residues glutamine 293, tyrosine 322, glutamate 343, and aspartate 392. Cysteine 419 acts as the Nucleophile in catalysis.

The protein belongs to the class I-like SAM-binding methyltransferase superfamily. RNA M5U methyltransferase family.

This is an uncharacterized protein from Porphyromonas gingivalis (strain ATCC BAA-308 / W83).